A 330-amino-acid polypeptide reads, in one-letter code: 5'-AMP-activated protein kinase subunit gamma-1 (330 aa).

Positions 1–21 are disordered; it reads MESVAAESSPALENEHFQETP. CBS domains are found at residues 42 to 102, 124 to 186, and 197 to 259; these read PTSS…KSAL, SFKP…PKPE, and IGTY…NLDV. ADP is bound by residues Arg69, 84 to 89, Val129, 150 to 151, and Lys169; these read MLTITD and HR. AMP-binding positions include Arg69, 84-89, Val129, His150, 150-151, Lys169, Thr199, Ala204, 225-226, and 241-244; these read MLTITD, HR, SA, and SKFD. ATP contacts are provided by residues Arg69, 84–89, Val129, 150–151, Arg151, and Lys169; these read MLTITD and HR. The short motif at 137–158 is the AMPK pseudosubstrate element; the sequence is LFDAVSSLIRNKIHRLPVIDPE. 241-244 lines the ADP pocket; sequence SKFD. 241–244 contacts ATP; sequence SKFD. Position 260 is a phosphoserine; by ULK1 (Ser260). The residue at position 262 (Thr262) is a Phosphothreonine; by ULK1. Residue Arg268 coordinates ADP. An AMP-binding site is contributed by Arg268. Arg268 provides a ligand contact to ATP. Ser269 carries the phosphoserine; by ULK1 modification. One can recognise a CBS 4 domain in the interval 271 to 328; it reads YFEGVLKCYLHETLETIINRLVEAEVHRLVVVDEHDVVKGIVSLSDILQALVLTGGEK. ADP is bound by residues Leu276 and 297-298; that span reads HR. AMP contacts are provided by residues Leu276, His297, 297-298, and 313-316; these read HR and SLSD. Residues Leu276 and 297 to 298 each bind ATP; that span reads HR.

This sequence belongs to the 5'-AMP-activated protein kinase gamma subunit family. As to quaternary structure, AMPK is a heterotrimer of an alpha catalytic subunit (PRKAA1 or PRKAA2), a beta (PRKAB1 or PRKAB2) and a gamma non-catalytic subunits (PRKAG1, PRKAG2 or PRKAG3). Interacts with FNIP1 and FNIP2. Post-translationally, phosphorylated by ULK1 and ULK2; leading to negatively regulate AMPK activity and suggesting the existence of a regulatory feedback loop between ULK1, ULK2 and AMPK. In terms of processing, glycosylated; O-GlcNAcylated by OGT, promoting the AMP-activated protein kinase (AMPK) activity.

Functionally, AMP/ATP-binding subunit of AMP-activated protein kinase (AMPK), an energy sensor protein kinase that plays a key role in regulating cellular energy metabolism. In response to reduction of intracellular ATP levels, AMPK activates energy-producing pathways and inhibits energy-consuming processes: inhibits protein, carbohydrate and lipid biosynthesis, as well as cell growth and proliferation. AMPK acts via direct phosphorylation of metabolic enzymes, and by longer-term effects via phosphorylation of transcription regulators. Also acts as a regulator of cellular polarity by remodeling the actin cytoskeleton; probably by indirectly activating myosin. Gamma non-catalytic subunit mediates binding to AMP, ADP and ATP, leading to activate or inhibit AMPK: AMP-binding results in allosteric activation of alpha catalytic subunit (PRKAA1 or PRKAA2) both by inducing phosphorylation and preventing dephosphorylation of catalytic subunits. ADP also stimulates phosphorylation, without stimulating already phosphorylated catalytic subunit. ATP promotes dephosphorylation of catalytic subunit, rendering the AMPK enzyme inactive. The protein is 5'-AMP-activated protein kinase subunit gamma-1 (Prkag1) of Mus musculus (Mouse).